Consider the following 623-residue polypeptide: Heterogeneous nuclear ribonucleoprotein Q (623 aa).

Position 2 is an N-acetylalanine (A2). Position 159 is a phosphoserine (S159). RRM domains are found at residues 162-241, 243-325, and 338-408; these read TEIF…ISVA, NRLF…WADP, and KVLF…FAKP. A Glycyl lysine isopeptide (Lys-Gly) (interchain with G-Cter in SUMO2) cross-link involves residue K168. K221 is subject to N6-acetyllysine. K363 carries the N6-acetyllysine modification. A Phosphotyrosine modification is found at Y373. The interaction with APOBEC1 stretch occupies residues 400–561; it reads NIEIVFAKPP…GARGGRGGNV (162 aa). Residue R444 is modified to Asymmetric dimethylarginine; by PRMT1; alternate. The residue at position 444 (R444) is an Omega-N-methylarginine; by PRMT1; alternate. 6 consecutive repeat copies span residues 448–450, 451–453, 460–464, 469–472, 478–480, and 485–488. The tract at residues 448–559 is 8 X 3 AA repeats of R-G-G; it reads RGGRGGYGYP…VRGARGGRGG (112 aa). The interval 460 to 488 is 3 X 4 AA repeats of Y-Y-G-Y; that stretch reads YYGYEDYYDYYGYDYHNYRGGYEDPYYGY. R496 is modified (omega-N-methylarginine; by PRMT1). The interval 497–623 is disordered; that stretch reads GRGGRGARGA…YQDTFGQQWK (127 aa). The 1-4 repeat unit spans residues 498-500; it reads RGG. Residues 504–522 show a composition bias toward low complexity; that stretch reads RGAAPSRGRGAAPPRGRAG. Asymmetric dimethylarginine; by PRMT1 is present on R510. Residues R518, R526, R536, and R539 each carry the asymmetric dimethylarginine; by PRMT1; alternate modification. R518, R526, R536, and R539 each carry omega-N-methylarginine; by PRMT1; alternate. An interaction with SMN region spans residues 518–549; the sequence is RGRAGYSQRGGPGSARGVRGARGGAQQQRGRG. A 1-5 repeat occupies 526 to 528; it reads RGG. 3 repeat units span residues 539-541, 554-556, and 557-559. Residues 550-562 show a composition bias toward gly residues; the sequence is VRGARGGRGGNVG. Residues 564-578 carry the Bipartite nuclear localization signal motif; it reads KRKADGYNQPDSKRR. Positions 580-595 are enriched in polar residues; the sequence is TNNQNWGSQPIAQQPL. Position 587 is a phosphoserine (S587). A Glycyl lysine isopeptide (Lys-Gly) (interchain with G-Cter in SUMO2) cross-link involves residue K607. The span at 611–623 shows a compositional bias: polar residues; it reads QEFYQDTFGQQWK.

In terms of assembly, isoform 1 is a component of the APOB mRNA editosome complex and interacts with APOBEC1 and A1CF (APOBEC1 complementation factor). Part of a complex associated with the FOS mCRD domain and consisting of PABPC1, PAIP1, CSDE1/UNR, HNRPD and SYNCRIP. Isoform 3 interacts with HNRPR. Interacts with POLR2A hyperphosphorylated C-terminal domain. Isoform 1, isoform 2 and isoform 3 interact with SMN. Isoform 3 interacts through its C-terminal domain with SYT7, SYT8 and SYT9. The non-phosphorylated and phosphorylated forms are colocalized with PAIP1 in polysomes. Interacts with HABP4. Identified in a histone pre-mRNA complex, at least composed of ERI1, LSM11, SLBP, SNRPB, SYNCRIP and YBX1. Identified in the spliceosome C complex. Component of the coding region determinant (CRD)-mediated complex, composed of DHX9, HNRNPU, IGF2BP1, SYNCRIP and YBX1. Identified in a mRNP complex, at least composed of DHX9, DDX3X, ELAVL1, HNRNPU, IGF2BP1, ILF3, PABPC1, PCBP2, PTBP2, STAU1, STAU2, SYNCRIP and YBX1. Identified in a mRNP granule complex, at least composed of ACTB, ACTN4, DHX9, ERG, HNRNPA1, HNRNPA2B1, HNRNPAB, HNRNPD, HNRNPL, HNRNPR, HNRNPU, HSPA1, HSPA8, IGF2BP1, ILF2, ILF3, NCBP1, NCL, PABPC1, PABPC4, PABPN1, RPLP0, RPS3, RPS3A, RPS4X, RPS8, RPS9, SYNCRIP, YBX1 and untranslated mRNAs. Interacts with GTPBP1. Component of the GAIT complex; in humans the complex assembly seems to be a two-step process in which EPRS1 first associates with SYNCRIP to form a pre-GAIT complex which is deficient in GAIT element binding. (Microbial infection) Interacts with minute virus of mice (MVM) NS1 protein. As to quaternary structure, (Microbial infection) Interacts with herpes virus 8/HHV-8 protein vIRF-1; this interaction induces ubiquitination and degradation of SYNCRIP. Post-translationally, phosphorylated on tyrosine. The membrane-bound form found in microsomes is phosphorylated in vitro by insulin receptor tyrosine kinase (INSR). Phosphorylation is inhibited upon binding to RNA, whereas the cytoplasmic form is poorly phosphorylated. In terms of tissue distribution, ubiquitously expressed. Detected in heart, brain, pancreas, placenta, spleen, lung, liver, skeletal muscle, kidney, thymus, prostate, uterus, small intestine, colon, peripheral blood and testis.

It is found in the cytoplasm. The protein resides in the microsome. Its subcellular location is the endoplasmic reticulum. The protein localises to the nucleus. It localises to the nucleoplasm. Heterogenous nuclear ribonucleoprotein (hnRNP) implicated in mRNA processing mechanisms. Component of the CRD-mediated complex that promotes MYC mRNA stability. Isoform 1, isoform 2 and isoform 3 are associated in vitro with pre-mRNA, splicing intermediates and mature mRNA protein complexes. Isoform 1 binds to apoB mRNA AU-rich sequences. Isoform 1 is part of the APOB mRNA editosome complex and may modulate the postranscriptional C to U RNA-editing of the APOB mRNA through either by binding to A1CF (APOBEC1 complementation factor), to APOBEC1 or to RNA itself. May be involved in translationally coupled mRNA turnover. Implicated with other RNA-binding proteins in the cytoplasmic deadenylation/translational and decay interplay of the FOS mRNA mediated by the major coding-region determinant of instability (mCRD) domain. Interacts in vitro preferentially with poly(A) and poly(U) RNA sequences. Isoform 3 may be involved in cytoplasmic vesicle-based mRNA transport through interaction with synaptotagmins. Component of the GAIT (gamma interferon-activated inhibitor of translation) complex which mediates interferon-gamma-induced transcript-selective translation inhibition in inflammation processes. Upon interferon-gamma activation assembles into the GAIT complex which binds to stem loop-containing GAIT elements in the 3'-UTR of diverse inflammatory mRNAs (such as ceruplasmin) and suppresses their translation; seems not to be essential for GAIT complex function. This chain is Heterogeneous nuclear ribonucleoprotein Q (SYNCRIP), found in Homo sapiens (Human).